The primary structure comprises 140 residues: Callisulfakinin (140 aa).

A signal peptide spans 1-30 (MYSQQRIFNSKYFIFFIAVLSIFWLPTMSA). Residues 31–109 (RNLENSKNEN…LEYEDEDRSK (79 aa)) constitute a propeptide that is removed on maturation. Sulfotyrosine is present on Tyr114. Phenylalanine amide is present on Phe119. At Tyr131 the chain carries Sulfotyrosine. Phenylalanine amide is present on Phe136. Residues 139 to 140 (SI) constitute a propeptide that is removed on maturation.

This sequence belongs to the gastrin/cholecystokinin family. In brain, it is specifically expressed in four pairs of neurons. Not expressed in other cells of the brain and in the thoracico-abdominal ganglion.

The protein localises to the secreted. In terms of biological role, callisulfakinin I is a neuropeptide. The existence of Callisulfakinin II is uncertain. This Calliphora vomitoria (Blue bottle fly) protein is Callisulfakinin.